Reading from the N-terminus, the 619-residue chain is Very-long-chain aldehyde decarbonylase GL1-1 (619 aa).

5 consecutive transmembrane segments (helical) span residues 44–64, 93–113, 123–143, 190–210, and 322–342; these read LLLL…WSSF, DNFL…FPSL, GLAV…YAAH, AAAC…VLGF, and PFLL…WAWS. A Fatty acid hydroxylase domain is found at 129–269; that stretch reads LLHVAATEPL…MPLFDLIGGT (141 aa).

Belongs to the sterol desaturase family. Homodimer.

The protein localises to the endoplasmic reticulum membrane. It carries out the reaction a long-chain fatty aldehyde + 2 NADPH + O2 + H(+) = a long-chain alkane + formate + 2 NADP(+) + H2O. Its function is as follows. Aldehyde decarbonylase involved in the conversion of aldehydes to alkanes. Core component of a very-long-chain alkane synthesis complex. The protein is Very-long-chain aldehyde decarbonylase GL1-1 of Oryza sativa subsp. indica (Rice).